The following is a 561-amino-acid chain: Potassium-transporting ATPase potassium-binding subunit (561 aa).

12 consecutive transmembrane segments (helical) span residues glycine 2–leucine 22, isoleucine 66–phenylalanine 86, alanine 135–isoleucine 155, isoleucine 177–threonine 197, leucine 253–phenylalanine 273, alanine 280–glycine 300, phenylalanine 327–valine 347, leucine 354–glycine 374, glycine 378–glycine 398, isoleucine 413–isoleucine 433, leucine 482–leucine 502, and alanine 531–isoleucine 551.

The protein belongs to the KdpA family. The system is composed of three essential subunits: KdpA, KdpB and KdpC.

The protein resides in the cell inner membrane. Functionally, part of the high-affinity ATP-driven potassium transport (or Kdp) system, which catalyzes the hydrolysis of ATP coupled with the electrogenic transport of potassium into the cytoplasm. This subunit binds the periplasmic potassium ions and delivers the ions to the membrane domain of KdpB through an intramembrane tunnel. This chain is Potassium-transporting ATPase potassium-binding subunit, found in Nostoc sp. (strain PCC 7120 / SAG 25.82 / UTEX 2576).